Here is a 224-residue protein sequence, read N- to C-terminus: A-type ATP synthase subunit D (224 aa).

Over residues 200-209 (KKVKDKKEAQ) the composition is skewed to basic and acidic residues. Residues 200–224 (KKVKDKKEAQEEAADEAAAAESTGA) are disordered. A compositionally biased stretch (low complexity) spans 215–224 (EAAAAESTGA).

It belongs to the V-ATPase D subunit family. In terms of assembly, has multiple subunits with at least A(3), B(3), C, D, E, F, H, I and proteolipid K(x).

The protein resides in the cell membrane. Component of the A-type ATP synthase that produces ATP from ADP in the presence of a proton gradient across the membrane. The polypeptide is A-type ATP synthase subunit D (Halobacterium salinarum (strain ATCC 29341 / DSM 671 / R1)).